We begin with the raw amino-acid sequence, 89 residues long: MALSAAKKKEILSEFGLHETDTGSTEAQVALLTERIRQLTEHLREHKHDHHSRRGLMLLVGRRKRLLKYLAANNVDRYRNLIARLGLRR.

Belongs to the universal ribosomal protein uS15 family. As to quaternary structure, part of the 30S ribosomal subunit. Forms a bridge to the 50S subunit in the 70S ribosome, contacting the 23S rRNA.

Its function is as follows. One of the primary rRNA binding proteins, it binds directly to 16S rRNA where it helps nucleate assembly of the platform of the 30S subunit by binding and bridging several RNA helices of the 16S rRNA. Functionally, forms an intersubunit bridge (bridge B4) with the 23S rRNA of the 50S subunit in the ribosome. The protein is Small ribosomal subunit protein uS15 of Corynebacterium kroppenstedtii (strain DSM 44385 / JCM 11950 / CIP 105744 / CCUG 35717).